A 780-amino-acid chain; its full sequence is ATP-dependent DNA helicase RecG (780 aa).

3 domain regions span residues 1-350 (MLCS…GGIP), 351-549 (KKIE…EMPP), and 550-780 (GRKE…IEVG). The wedge domain stretch occupies residues 154–252 (RKIFKLNDLL…VTPKEGEYVR (99 aa)). Residues Phe367, Leu369, Gly399, Ser400, Gly401, Lys402, Thr403, and Arg436 each coordinate ATP. A Helicase ATP-binding domain is found at 383 to 544 (DMISEKPMNR…FYGDLDVTVI (162 aa)). Residues 497 to 500 (DEQH) carry the DEAH box motif. One can recognise a Helicase C-terminal domain in the interval 563–728 (RVNEVYEFVR…EYDLKTRGPG (166 aa)).

Belongs to the helicase family. RecG subfamily. Monomer.

The catalysed reaction is Couples ATP hydrolysis with the unwinding of duplex DNA by translocating in the 3'-5' direction.. It carries out the reaction ATP + H2O = ADP + phosphate + H(+). Its function is as follows. Plays a critical role in recombination and DNA repair. Helps process Holliday junction intermediates to mature products by catalyzing branch migration. Has replication fork (Y-DNA) regression activity, unwinds stalled or blocked replication forks to make a HJ that can be resolved. Has a DNA unwinding activity characteristic of a DNA helicase with 3'-5' polarity. Might be a DNA translocase rather than a bona fide helicase. This chain is ATP-dependent DNA helicase RecG, found in Thermotoga maritima (strain ATCC 43589 / DSM 3109 / JCM 10099 / NBRC 100826 / MSB8).